The chain runs to 451 residues: tRNA-2-methylthio-N(6)-dimethylallyladenosine synthase (451 aa).

The region spanning 18-134 (ARVYLETYGC…LPNLLDLAES (117 aa)) is the MTTase N-terminal domain. The [4Fe-4S] cluster site is built by Cys27, Cys63, Cys97, Cys170, Cys174, and Cys177. A Radical SAM core domain is found at 156 to 386 (RKNGHSAFLA…IALQQKISAE (231 aa)). Positions 389-451 (RNDIGNTHEV…TSATLIGNAL (63 aa)) constitute a TRAM domain.

Belongs to the methylthiotransferase family. MiaB subfamily. Monomer. It depends on [4Fe-4S] cluster as a cofactor.

Its subcellular location is the cytoplasm. The catalysed reaction is N(6)-dimethylallyladenosine(37) in tRNA + (sulfur carrier)-SH + AH2 + 2 S-adenosyl-L-methionine = 2-methylsulfanyl-N(6)-dimethylallyladenosine(37) in tRNA + (sulfur carrier)-H + 5'-deoxyadenosine + L-methionine + A + S-adenosyl-L-homocysteine + 2 H(+). Its function is as follows. Catalyzes the methylthiolation of N6-(dimethylallyl)adenosine (i(6)A), leading to the formation of 2-methylthio-N6-(dimethylallyl)adenosine (ms(2)i(6)A) at position 37 in tRNAs that read codons beginning with uridine. This is tRNA-2-methylthio-N(6)-dimethylallyladenosine synthase from Chloroherpeton thalassium (strain ATCC 35110 / GB-78).